The chain runs to 350 residues: Biotin synthase (350 aa).

Positions 41-268 (NEVQISRLLS…LSRVRLSAGR (228 aa)) constitute a Radical SAM core domain. Cys56, Cys60, and Cys63 together coordinate [4Fe-4S] cluster. The [2Fe-2S] cluster site is built by Cys100, Cys131, Cys191, and Arg263.

This sequence belongs to the radical SAM superfamily. Biotin synthase family. As to quaternary structure, homodimer. [4Fe-4S] cluster is required as a cofactor. It depends on [2Fe-2S] cluster as a cofactor.

The enzyme catalyses (4R,5S)-dethiobiotin + (sulfur carrier)-SH + 2 reduced [2Fe-2S]-[ferredoxin] + 2 S-adenosyl-L-methionine = (sulfur carrier)-H + biotin + 2 5'-deoxyadenosine + 2 L-methionine + 2 oxidized [2Fe-2S]-[ferredoxin]. It participates in cofactor biosynthesis; biotin biosynthesis; biotin from 7,8-diaminononanoate: step 2/2. In terms of biological role, catalyzes the conversion of dethiobiotin (DTB) to biotin by the insertion of a sulfur atom into dethiobiotin via a radical-based mechanism. This is Biotin synthase from Shewanella oneidensis (strain ATCC 700550 / JCM 31522 / CIP 106686 / LMG 19005 / NCIMB 14063 / MR-1).